Here is a 515-residue protein sequence, read N- to C-terminus: Bifunctional purine biosynthesis protein PurH (515 aa).

One can recognise an MGS-like domain in the interval 1 to 145 (MTKRALISVS…KNHASVTVVV (145 aa)).

This sequence belongs to the PurH family.

The catalysed reaction is (6R)-10-formyltetrahydrofolate + 5-amino-1-(5-phospho-beta-D-ribosyl)imidazole-4-carboxamide = 5-formamido-1-(5-phospho-D-ribosyl)imidazole-4-carboxamide + (6S)-5,6,7,8-tetrahydrofolate. It carries out the reaction IMP + H2O = 5-formamido-1-(5-phospho-D-ribosyl)imidazole-4-carboxamide. It participates in purine metabolism; IMP biosynthesis via de novo pathway; 5-formamido-1-(5-phospho-D-ribosyl)imidazole-4-carboxamide from 5-amino-1-(5-phospho-D-ribosyl)imidazole-4-carboxamide (10-formyl THF route): step 1/1. The protein operates within purine metabolism; IMP biosynthesis via de novo pathway; IMP from 5-formamido-1-(5-phospho-D-ribosyl)imidazole-4-carboxamide: step 1/1. In Streptococcus gordonii (strain Challis / ATCC 35105 / BCRC 15272 / CH1 / DL1 / V288), this protein is Bifunctional purine biosynthesis protein PurH.